Reading from the N-terminus, the 116-residue chain is UPF0342 protein lhv_1666 (116 aa).

It belongs to the UPF0342 family.

This is UPF0342 protein lhv_1666 from Lactobacillus helveticus (strain DPC 4571).